The chain runs to 72 residues: Translation initiation factor IF-1 (72 aa).

The 72-residue stretch at 1–72 folds into the S1-like domain; that stretch reads MAKEELLEFP…TKGRINYRFK (72 aa).

Belongs to the IF-1 family. Component of the 30S ribosomal translation pre-initiation complex which assembles on the 30S ribosome in the order IF-2 and IF-3, IF-1 and N-formylmethionyl-tRNA(fMet); mRNA recruitment can occur at any time during PIC assembly.

The protein localises to the cytoplasm. Functionally, one of the essential components for the initiation of protein synthesis. Stabilizes the binding of IF-2 and IF-3 on the 30S subunit to which N-formylmethionyl-tRNA(fMet) subsequently binds. Helps modulate mRNA selection, yielding the 30S pre-initiation complex (PIC). Upon addition of the 50S ribosomal subunit IF-1, IF-2 and IF-3 are released leaving the mature 70S translation initiation complex. This Dinoroseobacter shibae (strain DSM 16493 / NCIMB 14021 / DFL 12) protein is Translation initiation factor IF-1.